Consider the following 163-residue polypeptide: Secretory-abundant heat soluble protein 53582 (163 aa).

The first 19 residues, 1–19 (MARLFVAVALFGVVAFAAA), serve as a signal peptide directing secretion. The segment at 22-51 (EWTGKTWLGSWASTDRAENWEAFVDALGLP) is SAHS-c1. The interval 67-95 (YKQGDKYHHEVSIPSKNFKKAIEYTLGTE) is SAHS-c2. An SAHS-c3 region spans residues 108–157 (KYTEDGEKLVADVQIPSKNKQIHDIYEVQGDTLTKTYKVGDVVAKRWFTR).

The protein belongs to the Secretory-abundant heat soluble protein (SAHS) family.

Its subcellular location is the secreted. Functionally, secreted heat soluble protein acting as a molecular shield in water-deficient condition. Tardigrade-specific intrinsically disordered proteins (TDPs) are essential for desiccation tolerance by forming non-crystalline amorphous solids upon desiccation, and this vitrified state mirrors their protective capabilities. The protein is Secretory-abundant heat soluble protein 53582 of Hypsibius exemplaris (Freshwater tardigrade).